Consider the following 383-residue polypeptide: Outer membrane protein S2 (383 aa).

The first 21 residues, 1 to 21, serve as a signal peptide directing secretion; sequence MKRKVLALVIPALLAAGAAHA.

It belongs to the Gram-negative porin family. Homotrimer.

Its subcellular location is the cell outer membrane. Functionally, forms pores that allow passive diffusion of small molecules across the outer membrane. This is Outer membrane protein S2 (ompS2) from Salmonella typhi.